The sequence spans 210 residues: Proteasome subunit beta (210 aa).

A propeptide spans 1–9 (MDNDKHLKG) (removed in mature form; by autocatalysis). Thr-10 (nucleophile) is an active-site residue.

This sequence belongs to the peptidase T1B family. In terms of assembly, the 20S proteasome core is composed of 14 alpha and 14 beta subunits that assemble into four stacked heptameric rings, resulting in a barrel-shaped structure. The two inner rings, each composed of seven catalytic beta subunits, are sandwiched by two outer rings, each composed of seven alpha subunits. The catalytic chamber with the active sites is on the inside of the barrel. Has a gated structure, the ends of the cylinder being occluded by the N-termini of the alpha-subunits. Is capped at one or both ends by the proteasome regulatory ATPase, PAN.

The protein resides in the cytoplasm. It catalyses the reaction Cleavage of peptide bonds with very broad specificity.. Its activity is regulated as follows. The formation of the proteasomal ATPase PAN-20S proteasome complex, via the docking of the C-termini of PAN into the intersubunit pockets in the alpha-rings, triggers opening of the gate for substrate entry. Interconversion between the open-gate and close-gate conformations leads to a dynamic regulation of the 20S proteasome proteolysis activity. In terms of biological role, component of the proteasome core, a large protease complex with broad specificity involved in protein degradation. This chain is Proteasome subunit beta, found in Methanococcoides burtonii (strain DSM 6242 / NBRC 107633 / OCM 468 / ACE-M).